The chain runs to 215 residues: ATP phosphoribosyltransferase (215 aa).

Belongs to the ATP phosphoribosyltransferase family. Short subfamily. In terms of assembly, heteromultimer composed of HisG and HisZ subunits.

Its subcellular location is the cytoplasm. The enzyme catalyses 1-(5-phospho-beta-D-ribosyl)-ATP + diphosphate = 5-phospho-alpha-D-ribose 1-diphosphate + ATP. The protein operates within amino-acid biosynthesis; L-histidine biosynthesis; L-histidine from 5-phospho-alpha-D-ribose 1-diphosphate: step 1/9. Catalyzes the condensation of ATP and 5-phosphoribose 1-diphosphate to form N'-(5'-phosphoribosyl)-ATP (PR-ATP). Has a crucial role in the pathway because the rate of histidine biosynthesis seems to be controlled primarily by regulation of HisG enzymatic activity. This Acidithiobacillus ferrooxidans (strain ATCC 23270 / DSM 14882 / CIP 104768 / NCIMB 8455) (Ferrobacillus ferrooxidans (strain ATCC 23270)) protein is ATP phosphoribosyltransferase.